We begin with the raw amino-acid sequence, 196 residues long: ATP-dependent Clp protease proteolytic subunit (196 aa).

S96 serves as the catalytic Nucleophile. The active site involves H121.

It belongs to the peptidase S14 family. As to quaternary structure, fourteen ClpP subunits assemble into 2 heptameric rings which stack back to back to give a disk-like structure with a central cavity, resembling the structure of eukaryotic proteasomes.

It localises to the cytoplasm. The catalysed reaction is Hydrolysis of proteins to small peptides in the presence of ATP and magnesium. alpha-casein is the usual test substrate. In the absence of ATP, only oligopeptides shorter than five residues are hydrolyzed (such as succinyl-Leu-Tyr-|-NHMec, and Leu-Tyr-Leu-|-Tyr-Trp, in which cleavage of the -Tyr-|-Leu- and -Tyr-|-Trp bonds also occurs).. Functionally, cleaves peptides in various proteins in a process that requires ATP hydrolysis. Has a chymotrypsin-like activity. Plays a major role in the degradation of misfolded proteins. The sequence is that of ATP-dependent Clp protease proteolytic subunit from Streptococcus gordonii (strain Challis / ATCC 35105 / BCRC 15272 / CH1 / DL1 / V288).